A 273-amino-acid chain; its full sequence is 2,3,4,5-tetrahydropyridine-2,6-dicarboxylate N-succinyltransferase (273 aa).

R105 and D142 together coordinate substrate.

The protein belongs to the transferase hexapeptide repeat family. In terms of assembly, homotrimer.

It is found in the cytoplasm. It catalyses the reaction (S)-2,3,4,5-tetrahydrodipicolinate + succinyl-CoA + H2O = (S)-2-succinylamino-6-oxoheptanedioate + CoA. The protein operates within amino-acid biosynthesis; L-lysine biosynthesis via DAP pathway; LL-2,6-diaminopimelate from (S)-tetrahydrodipicolinate (succinylase route): step 1/3. The polypeptide is 2,3,4,5-tetrahydropyridine-2,6-dicarboxylate N-succinyltransferase (Bordetella parapertussis (strain 12822 / ATCC BAA-587 / NCTC 13253)).